Reading from the N-terminus, the 171-residue chain is Homeobox protein engrailed-1-B (171 aa).

Disordered stretches follow at residues 1–41 (EDPG…NAAP) and 60–86 (YSDRPSSGPRTRKLKKKKSEKEDKRPR). Residues 15–29 (PDSDTPSDSSKGSDS) show a composition bias toward low complexity. Residues 82-141 (DKRPRTAFTAEQLQRLKAEFQANRYITEQRRQTLAQELSLNESQIKIWFQNKRAKIKKAS) constitute a DNA-binding region (homeobox).

It belongs to the engrailed homeobox family.

It localises to the nucleus. Required for proper formation of the apical ectodermal ridge and correct dorsal-ventral patterning in the limb. In Xenopus laevis (African clawed frog), this protein is Homeobox protein engrailed-1-B (en1-b).